The sequence spans 273 residues: 3-methyl-2-oxobutanoate hydroxymethyltransferase (273 aa).

Mg(2+) contacts are provided by Asp-49 and Asp-88. 3-methyl-2-oxobutanoate is bound by residues 49-50, Asp-88, and Lys-118; that span reads DS. Glu-120 contributes to the Mg(2+) binding site. The active-site Proton acceptor is Glu-187.

This sequence belongs to the PanB family. Homodecamer; pentamer of dimers. It depends on Mg(2+) as a cofactor.

Its subcellular location is the cytoplasm. It carries out the reaction 3-methyl-2-oxobutanoate + (6R)-5,10-methylene-5,6,7,8-tetrahydrofolate + H2O = 2-dehydropantoate + (6S)-5,6,7,8-tetrahydrofolate. The protein operates within cofactor biosynthesis; (R)-pantothenate biosynthesis; (R)-pantoate from 3-methyl-2-oxobutanoate: step 1/2. Functionally, catalyzes the reversible reaction in which hydroxymethyl group from 5,10-methylenetetrahydrofolate is transferred onto alpha-ketoisovalerate to form ketopantoate. This is 3-methyl-2-oxobutanoate hydroxymethyltransferase from Sinorhizobium medicae (strain WSM419) (Ensifer medicae).